Here is a 159-residue protein sequence, read N- to C-terminus: uncharacterized protein (159 aa).

3 helical membrane passes run 10 to 30 (FLSMFFMAILFFPAFNASLFF), 52 to 72 (MLILCFGFMSFSFLNIHVILL), and 96 to 116 (LTLIFLLIAIVIAPLIAPFVT).

The protein localises to the membrane. This is an uncharacterized protein from Escherichia coli (strain K12).